The primary structure comprises 202 residues: Holliday junction branch migration complex subunit RuvA (202 aa).

A domain I region spans residues 1–65 (MIAYVEGRLA…EDALELYGFA (65 aa)). The interval 66-144 (TWDERQTFIV…VEDLPAAAPL (79 aa)) is domain II. Positions 145–155 (VTGGAPGGVFR) are flexible linker. Residues 155-202 (RDALAGLANLGYGEEEASHVLKEVLHGEPDLDVGGALRAALRALARGR) form a domain III region.

Belongs to the RuvA family. As to quaternary structure, homotetramer. Forms an RuvA(8)-RuvB(12)-Holliday junction (HJ) complex. HJ DNA is sandwiched between 2 RuvA tetramers; dsDNA enters through RuvA and exits via RuvB. An RuvB hexamer assembles on each DNA strand where it exits the tetramer. Each RuvB hexamer is contacted by two RuvA subunits (via domain III) on 2 adjacent RuvB subunits; this complex drives branch migration. In the full resolvosome a probable DNA-RuvA(4)-RuvB(12)-RuvC(2) complex forms which resolves the HJ.

Its subcellular location is the cytoplasm. Its function is as follows. The RuvA-RuvB-RuvC complex processes Holliday junction (HJ) DNA during genetic recombination and DNA repair, while the RuvA-RuvB complex plays an important role in the rescue of blocked DNA replication forks via replication fork reversal (RFR). RuvA specifically binds to HJ cruciform DNA, conferring on it an open structure. The RuvB hexamer acts as an ATP-dependent pump, pulling dsDNA into and through the RuvAB complex. HJ branch migration allows RuvC to scan DNA until it finds its consensus sequence, where it cleaves and resolves the cruciform DNA. In Nitratidesulfovibrio vulgaris (strain DP4) (Desulfovibrio vulgaris), this protein is Holliday junction branch migration complex subunit RuvA.